We begin with the raw amino-acid sequence, 109 residues long: Large ribosomal subunit protein uL24 (109 aa).

It belongs to the universal ribosomal protein uL24 family. Part of the 50S ribosomal subunit.

One of two assembly initiator proteins, it binds directly to the 5'-end of the 23S rRNA, where it nucleates assembly of the 50S subunit. Its function is as follows. One of the proteins that surrounds the polypeptide exit tunnel on the outside of the subunit. This chain is Large ribosomal subunit protein uL24, found in Legionella pneumophila (strain Corby).